We begin with the raw amino-acid sequence, 1433 residues long: DNA-directed RNA polymerase subunit beta' (1433 aa).

4 residues coordinate Zn(2+): Cys-66, Cys-68, Cys-81, and Cys-84. Mg(2+) contacts are provided by Asp-474, Asp-476, and Asp-478. 4 residues coordinate Zn(2+): Cys-823, Cys-897, Cys-904, and Cys-907.

This sequence belongs to the RNA polymerase beta' chain family. As to quaternary structure, the RNAP catalytic core consists of 2 alpha, 1 beta, 1 beta' and 1 omega subunit. When a sigma factor is associated with the core the holoenzyme is formed, which can initiate transcription. The cofactor is Mg(2+). Zn(2+) is required as a cofactor.

It catalyses the reaction RNA(n) + a ribonucleoside 5'-triphosphate = RNA(n+1) + diphosphate. In terms of biological role, DNA-dependent RNA polymerase catalyzes the transcription of DNA into RNA using the four ribonucleoside triphosphates as substrates. This is DNA-directed RNA polymerase subunit beta' from Amoebophilus asiaticus (strain 5a2).